The primary structure comprises 172 residues: Peptidyl-tRNA hydrolase (172 aa).

Position 10 (Y10) interacts with tRNA. The active-site Proton acceptor is the H15. F59, N61, and N101 together coordinate tRNA.

Belongs to the PTH family. Monomer.

Its subcellular location is the cytoplasm. The enzyme catalyses an N-acyl-L-alpha-aminoacyl-tRNA + H2O = an N-acyl-L-amino acid + a tRNA + H(+). Hydrolyzes ribosome-free peptidyl-tRNAs (with 1 or more amino acids incorporated), which drop off the ribosome during protein synthesis, or as a result of ribosome stalling. In terms of biological role, catalyzes the release of premature peptidyl moieties from peptidyl-tRNA molecules trapped in stalled 50S ribosomal subunits, and thus maintains levels of free tRNAs and 50S ribosomes. This is Peptidyl-tRNA hydrolase from Rubrobacter xylanophilus (strain DSM 9941 / JCM 11954 / NBRC 16129 / PRD-1).